Reading from the N-terminus, the 440-residue chain is Alpha-methylserine aldolase (440 aa).

Lys-255 carries the N6-(pyridoxal phosphate)lysine modification.

It belongs to the SHMT family. Alpha-methylserine aldolase subfamily. In terms of assembly, homodimer. The cofactor is pyridoxal 5'-phosphate.

It catalyses the reaction 2-methyl-L-serine = formaldehyde + L-alanine. Functionally, catalyzes the reversible interconversion of alpha-methyl-L-serine to L-alanine and formaldehyde. This chain is Alpha-methylserine aldolase, found in Variovorax paradoxus.